A 100-amino-acid chain; its full sequence is Small ribosomal subunit protein bS20 (100 aa).

The protein belongs to the bacterial ribosomal protein bS20 family.

In terms of biological role, binds directly to 16S ribosomal RNA. This Synechococcus sp. (strain JA-3-3Ab) (Cyanobacteria bacterium Yellowstone A-Prime) protein is Small ribosomal subunit protein bS20.